Reading from the N-terminus, the 388-residue chain is MQLTIIVLDSVGAGALPDAAAFGDAGAHTLNHTLKQAPVPLPHLARLGLGKLPTIDTSPETVPADAEVTGAYGRMREVSPGKDTSTGHWEFMGVQLEHPFQVFPDGFPPEVMDRFDAATGRGHLCNKPYSGTDVIRDYGEEHRRTGFPIVYTSADSVFQIAAHEDVVPLETLYEWCRAAREILQGEYAVARVIARPFRGEPPFERANEHRRDFSLTPPRTVLDALKEAGKDVVGIGKIPDIYAGQGFTESIHTDDNADGIRKTLERMKAGVDGLIFTNLVDTDAKFGHRRDPAGYSNALAEFDRALPDLIAALPEDGLLIILSDHGNDPTWHGTDHTREYGLLLAYGHGLSARDLGERETFADVGATVAEALGAQWDGPGTSFWNELR.

Residues D9, D283, H288, D324, H325, and H336 each contribute to the Mn(2+) site.

This sequence belongs to the phosphopentomutase family. Mn(2+) is required as a cofactor.

Its subcellular location is the cytoplasm. The catalysed reaction is 2-deoxy-alpha-D-ribose 1-phosphate = 2-deoxy-D-ribose 5-phosphate. The enzyme catalyses alpha-D-ribose 1-phosphate = D-ribose 5-phosphate. Its pathway is carbohydrate degradation; 2-deoxy-D-ribose 1-phosphate degradation; D-glyceraldehyde 3-phosphate and acetaldehyde from 2-deoxy-alpha-D-ribose 1-phosphate: step 1/2. Its function is as follows. Isomerase that catalyzes the conversion of deoxy-ribose 1-phosphate (dRib-1-P) and ribose 1-phosphate (Rib-1-P) to deoxy-ribose 5-phosphate (dRib-5-P) and ribose 5-phosphate (Rib-5-P), respectively. This chain is Phosphopentomutase, found in Deinococcus radiodurans (strain ATCC 13939 / DSM 20539 / JCM 16871 / CCUG 27074 / LMG 4051 / NBRC 15346 / NCIMB 9279 / VKM B-1422 / R1).